The primary structure comprises 128 residues: Nanos homolog 1 (128 aa).

The essential for its translational repressor activity stretch occupies residues 7–23 (FDSWSDYLGLSSLISRG). Residues 25 to 52 (QPQREGERPRWDVLSPASAEPLPSNESV) are disordered. A Nanos-type zinc finger spans residues 56–110 (GCGFCRSNREALSLYTSHRLRALDGRVLCPVLRGYTCPLCGANGDWAHTMRYCPL). Residues cysteine 57, cysteine 60, histidine 73, cysteine 84, cysteine 92, cysteine 95, histidine 103, and cysteine 108 each coordinate Zn(2+). 2 short sequence motifs (C2HC) span residues 57 to 84 (CGFC…RVLC) and 92 to 108 (CPLC…MRYC).

It belongs to the nanos family. As to quaternary structure, interacts with ccnb1. In terms of tissue distribution, ovary and testis.

It is found in the cytoplasm. The protein resides in the perinuclear region. Acts as a translational repressor. Can mediate repression affecting different steps in the translation process: cap-driven, IRES-driven, polyadenylated RNAs or nonpolyadenylated RNAs. Essential for the development of primordial germ cells (PGCs) by ensuring their proper migration and survival. The chain is Nanos homolog 1 (nanos1) from Xenopus laevis (African clawed frog).